The following is a 284-amino-acid chain: MKLVIVSGRSGSGKSVALRVLEDLGYYCVDNLPLPLIGSLLEQLKGSNDLVAISVDVRNLPEQDKVLVKQLASLPEGTELTSFFLNSSDKVLLKRYSETRRLHPLSKSRVSLQEAIKLEGKLLEPLSQQMDHYIDTSNLNIYELSDQVRQILLGSVDKELVINFESFGFKHGMPTEADFMFDVRFLPNPHWEPELRPLTGLDEPVAEFLNRQPLVNKFIWQIENLLETWLPHLERNNRSYLTIAIGCTGGQHRSVYVAEQLAKRFSNGKHKVNARHRELNHAKA.

8-15 (GRSGSGKS) is an ATP binding site. 56 to 59 (DVRN) contributes to the GTP binding site.

The protein belongs to the RapZ-like family.

In terms of biological role, displays ATPase and GTPase activities. This is Nucleotide-binding protein Shewmr7_3352 from Shewanella sp. (strain MR-7).